The chain runs to 338 residues: Anthranilate phosphoribosyltransferase (338 aa).

5-phospho-alpha-D-ribose 1-diphosphate contacts are provided by residues G81, 84–85 (GD), T89, 91–94 (NIST), 109–117 (KHGNRGVSS), and S121. An anthranilate-binding site is contributed by G81. Mg(2+) is bound at residue S93. N112 provides a ligand contact to anthranilate. Position 167 (R167) interacts with anthranilate. Mg(2+)-binding residues include D225 and E226.

The protein belongs to the anthranilate phosphoribosyltransferase family. As to quaternary structure, homodimer. The cofactor is Mg(2+).

The enzyme catalyses N-(5-phospho-beta-D-ribosyl)anthranilate + diphosphate = 5-phospho-alpha-D-ribose 1-diphosphate + anthranilate. It participates in amino-acid biosynthesis; L-tryptophan biosynthesis; L-tryptophan from chorismate: step 2/5. Catalyzes the transfer of the phosphoribosyl group of 5-phosphorylribose-1-pyrophosphate (PRPP) to anthranilate to yield N-(5'-phosphoribosyl)-anthranilate (PRA). This is Anthranilate phosphoribosyltransferase from Methanoculleus marisnigri (strain ATCC 35101 / DSM 1498 / JR1).